The following is a 434-amino-acid chain: Arrestin domain-containing protein 1 (434 aa).

The disordered stretch occupies residues 295 to 345 (PGPGSSPGLLSPVVPSAPPQEEAEAVASGPHFSDPVSLSTKSHSQQQPLST). The segment covering 330 to 342 (VSLSTKSHSQQQP) has biased composition (polar residues). Short sequence motifs (PPxY motif) lie at residues 401–404 (PPEY) and 414–417 (PPSY).

It belongs to the arrestin family. In terms of assembly, interacts (via PPxY motifs) with ITCH (via WW domains); the interaction is direct and participates in the recruitment of the ubiquitin-protein ligase ITCH to the NOTCH1 receptor. Interacts with ARRB1 and ARRB2; the interaction is direct. Interacts with TSG101; may recruit TSG101 to the plasma membrane. Interacts (via PPxY motifs) with WWP2 (via WW domains); ubiquitinates ARRDC1. Interacts with SLC11A2; controls the incorporation of SLC11A2 into extracellular vesicles through an ubiquitination-dependent mechanism. Interacts with WWP1 (via WW domains). Interacts with NEDD4 (via WW domains). Interacts with PDCD6IP. In terms of processing, ubiquitinated. Ubiquitination by WWP2; promotes localization to extracellular microvesicles. Ubiquitinated by WWP1.

The protein localises to the cell membrane. In terms of biological role, functions as an adapter recruiting ubiquitin-protein ligases to their specific substrates. Through an ubiquitination-dependent mechanism plays for instance a role in the incorporation of SLC11A2 into extracellular vesicles. More generally, plays a role in the extracellular transport of proteins between cells through the release in the extracellular space of microvesicles. By participating in the ITCH-mediated ubiquitination and subsequent degradation of NOTCH1, negatively regulates the NOTCH signaling pathway. This is Arrestin domain-containing protein 1 from Rattus norvegicus (Rat).